A 209-amino-acid chain; its full sequence is Uracil phosphoribosyltransferase (209 aa).

5-phospho-alpha-D-ribose 1-diphosphate contacts are provided by residues arginine 79, arginine 104, and 131–139 (DPMLATGGS). Uracil is bound by residues isoleucine 194 and 199-201 (GDA). Residue aspartate 200 participates in 5-phospho-alpha-D-ribose 1-diphosphate binding.

This sequence belongs to the UPRTase family. Mg(2+) is required as a cofactor.

It catalyses the reaction UMP + diphosphate = 5-phospho-alpha-D-ribose 1-diphosphate + uracil. The protein operates within pyrimidine metabolism; UMP biosynthesis via salvage pathway; UMP from uracil: step 1/1. Its activity is regulated as follows. Allosterically activated by GTP. In terms of biological role, catalyzes the conversion of uracil and 5-phospho-alpha-D-ribose 1-diphosphate (PRPP) to UMP and diphosphate. This Pediococcus pentosaceus (strain ATCC 25745 / CCUG 21536 / LMG 10740 / 183-1w) protein is Uracil phosphoribosyltransferase.